A 738-amino-acid chain; its full sequence is Protostadienol synthase A (738 aa).

A PFTB 1 repeat occupies Lys-132 to Gly-173. The active-site Proton donor is Asp-463. PFTB repeat units lie at residues Leu-490–Val-531, Val-567–Gly-607, and Cys-616–Gly-663.

This sequence belongs to the terpene cyclase/mutase family.

It carries out the reaction (S)-2,3-epoxysqualene = (17Z)-protosta-17(20),24-dien-3beta-ol. Its function is as follows. Protostadienol synthase which cyclizes (3S)-oxidosqualene to (17Z)-protosta-17(20),24-dien-3-beta-ol (protostadienol), the biosynthetic precursor of helvolic acid, a secondary metabolite which promotes virulence. This chain is Protostadienol synthase A (pdsA), found in Neosartorya fischeri (strain ATCC 1020 / DSM 3700 / CBS 544.65 / FGSC A1164 / JCM 1740 / NRRL 181 / WB 181) (Aspergillus fischerianus).